The sequence spans 407 residues: MMVARTRSQKRKLEEINNQKKIKTKKKATGQQTSNTKNLRDVKKKGKQLAYVPRTSPRKSYKNGEYVLAKMSSFPWWPARVASQKSIPTEVRERLKRNFRMDNGIFVQFLPSRDYAIISSSNVLPLTVDESRFILDHDLSTKYIQKTVGLIIASVKRKVSFSDVEEDEFEPENTRKKLQKPIEKPKKEKIEATPKIDGGKRLKNEKSSAEISQTSKQRPSRRSARVRMATDNAQKSPSPIPSPKKTAKKRVRFAGSLEELPKFSLEYQLAQPISTVDMYAQVHYIRFNTLLYYRYQLQEILLSYNHYPQESDMSHVHQILEMIENFSAINSELLESTKLYSLFTLLVKLSDIPLDEKYDFSSRFSTLLLQFQAFVQPKTMTSNVSTAPIGKNAQVNTEAARPSVITT.

The segment at 1–46 (MMVARTRSQKRKLEEINNQKKIKTKKKATGQQTSNTKNLRDVKKKG) is disordered. Positions 63-129 (NGEYVLAKMS…SSNVLPLTVD (67 aa)) constitute a PWWP domain. A phosphoserine mark is found at Ser160 and Ser162. The interval 163-248 (DVEEDEFEPE…PIPSPKKTAK (86 aa)) is disordered. A compositionally biased stretch (basic and acidic residues) spans 172 to 208 (ENTRKKLQKPIEKPKKEKIEATPKIDGGKRLKNEKSS). Phosphoserine occurs at positions 236, 238, and 242.

In terms of assembly, component of the mst2 complex composed of at least eaf6, mst2, nto1, pdp3, ptf1, ptf2 and tfg3.

The protein resides in the nucleus. Its function is as follows. Component of the mst2 complex which is a highly specific H3 lysine 14 (H3K14) acetyltransferase that functions together with gcn5 to regulate global levels of H3K14 acetylation (H3K14ac), critical for DNA damage checkpoint activation. The polypeptide is PWWP domain-containing protein 3 (pdp3) (Schizosaccharomyces pombe (strain 972 / ATCC 24843) (Fission yeast)).